The following is a 670-amino-acid chain: Probable E3 ubiquitin ligase complex SCF subunit sconB (670 aa).

A disordered region spans residues 1–38 (MSSPPPFTSIFGGPAESAEEIDADADNSQLKPHNRSNV). The segment covering 27-38 (NSQLKPHNRSNV) has biased composition (polar residues). One can recognise an F-box domain in the interval 163 to 209 (IDFIAALPPEISFKILCYLDTTSLCKAAQVSRRWRALADDDVVWHRM). The interval 249–287 (VNGTSPKATPALPEDASPVADSSGTGKRKPEPSEEETAV) is disordered. 7 WD repeats span residues 339-376 (GHTN…EIRT), 379-418 (GHES…STYT), 420-456 (HRGG…TCLL), 458-499 (GHTD…RTFH), 553-596 (ISQS…CLRT), 599-636 (GHLE…CERT), and 639-670 (GHSG…SFQS).

This sequence belongs to the WD repeat MET30/SCONB/SCON-2 family. Component of the SCF(sconB) E3 ubiquitin ligase complex.

Its pathway is protein modification; protein ubiquitination. In terms of biological role, component of the SCF(sconB) E3 ubiquitin ligase complex involved in the regulation of sulfur metabolite repression, probably by mediating the inactivation or degradation of the metR transcription factor. The chain is Probable E3 ubiquitin ligase complex SCF subunit sconB (sconB) from Aspergillus niger (strain ATCC MYA-4892 / CBS 513.88 / FGSC A1513).